The sequence spans 563 residues: Arginine--tRNA ligase (563 aa).

A 'HIGH' region motif is present at residues 123–133 (PNIAKDMHVGH).

Belongs to the class-I aminoacyl-tRNA synthetase family. Monomer.

Its subcellular location is the cytoplasm. It catalyses the reaction tRNA(Arg) + L-arginine + ATP = L-arginyl-tRNA(Arg) + AMP + diphosphate. This chain is Arginine--tRNA ligase (argS), found in Chlamydia trachomatis serovar D (strain ATCC VR-885 / DSM 19411 / UW-3/Cx).